The following is a 375-amino-acid chain: uncharacterized protein (375 aa).

Lys-99 is covalently cross-linked (Isoglutamyl lysine isopeptide (Lys-Gln) (interchain with Q-Cter in protein Pup)).

The protein belongs to the IMPDH/GMPR family.

This is an uncharacterized protein from Mycolicibacterium smegmatis (strain ATCC 700084 / mc(2)155) (Mycobacterium smegmatis).